The chain runs to 422 residues: NADH-quinone oxidoreductase subunit D 1 (422 aa).

It belongs to the complex I 49 kDa subunit family. In terms of assembly, NDH-1 is composed of 14 different subunits. Subunits NuoB, C, D, E, F, and G constitute the peripheral sector of the complex.

The protein resides in the cell membrane. The catalysed reaction is a quinone + NADH + 5 H(+)(in) = a quinol + NAD(+) + 4 H(+)(out). Its function is as follows. NDH-1 shuttles electrons from NADH, via FMN and iron-sulfur (Fe-S) centers, to quinones in the respiratory chain. The immediate electron acceptor for the enzyme in this species is believed to be ubiquinone. Couples the redox reaction to proton translocation (for every two electrons transferred, four hydrogen ions are translocated across the cytoplasmic membrane), and thus conserves the redox energy in a proton gradient. The protein is NADH-quinone oxidoreductase subunit D 1 of Herpetosiphon aurantiacus (strain ATCC 23779 / DSM 785 / 114-95).